We begin with the raw amino-acid sequence, 234 residues long: uncharacterized protein (234 aa).

Residues 1–12 (MGSSSSSSLNNS) show a composition bias toward low complexity. The interval 1 to 184 (MGSSSSSSLN…TPYLSGANSR (184 aa)) is disordered. Composition is skewed to polar residues over residues 21–40 (TPES…SILS) and 52–64 (KSTS…NLTP). The segment covering 66 to 77 (KSRWSFSSSKKS) has biased composition (low complexity). The span at 105 to 120 (GDFTPSLGNTPKSSFS) shows a compositional bias: polar residues. The segment covering 152–167 (LGELFRDSIREEREES) has biased composition (basic and acidic residues).

As to quaternary structure, interacts with RLK902. Expressed in stems, rosette leaves and roots and weakly in inflorescences.

This is an uncharacterized protein from Arabidopsis thaliana (Mouse-ear cress).